The primary structure comprises 3033 residues: Genome polyprotein (3033 aa).

Ser2 is modified (N-acetylserine; by host). The interval Ser2–Lys23 is interaction with STAT1. An interaction with EIF2AK2/PKR region spans residues Ser2–Pro58. The interaction with DDX3X stretch occupies residues Ser2–Arg59. Residues Ser2 to Ser75 are disordered. 2 short sequence motifs (nuclear localization signal) span residues Pro5–Arg13 and Pro38–Arg43. Over residues Pro7–Asn16 the composition is skewed to basic residues. Over residues Gly32–Arg47 the composition is skewed to low complexity. Ser53 carries the post-translational modification Phosphoserine; by host. 2 short sequence motifs (nuclear localization signal) span residues Pro58–Pro64 and Pro66–Ser71. Phosphoserine; by host is present on residues Ser99 and Ser116. An important for endoplasmic reticulum and mitochondrial localization region spans residues Pro112 to Ala152. Residues Val122–Ser173 form an interaction with APOA2 region. The important for lipid droplets localization stretch occupies residues Tyr164–Arg167. The propeptide at Leu178 to Ser191 is ER anchor for the core protein, removed in mature form by host signal peptidase. The Lumenal segment spans residues Ser190 to Gly358. 2 N-linked (GlcNAc...) asparagine; by host glycosylation sites follow: Asn196 and Asn209. Residues Ile265 to Glu296 are important for fusion. Residue Asn305 is glycosylated (N-linked (GlcNAc...) asparagine; by host). A helical membrane pass occupies residues Leu359–Ala379. Topologically, residues Gly380–Leu729 are lumenal. The HVR1 stretch occupies residues Thr385–Gln412. Residues Asn417, Asn423, and Asn430 are each glycosylated (N-linked (GlcNAc...) (high mannose) asparagine; by host). Intrachain disulfides connect Cys429-Cys554, Cys452-Cys459, Cys488-Cys496, and Cys505-Cys510. The N-linked (GlcNAc...) asparagine; by host glycan is linked to Asn448. The HVR2 stretch occupies residues Glu475–Asn480. A glycan (N-linked (GlcNAc...) asparagine; by host) is linked at Asn477. Residues Glu482–Pro495 form a CD81-binding 1 region. Asn534 is a glycosylation site (N-linked (GlcNAc...) asparagine; by host). Residues Pro546–Gly553 are CD81-binding 2. N-linked (GlcNAc...) asparagine; by host glycosylation occurs at Asn558. Cystine bridges form between Cys566/Cys571, Cys585/Cys589, Cys601/Cys624, and Cys611/Cys648. Asn627 and Asn649 each carry an N-linked (GlcNAc...) (high mannose) asparagine; by host glycan. Cys656 and Cys681 are oxidised to a cystine. Residues Gly664–Glu675 are PKR/eIF2-alpha phosphorylation homology domain (PePHD). A helical transmembrane segment spans residues Leu730–Ala750. Topologically, residues Ala751–Ala761 are lumenal. The chain crosses the membrane as a helical span at residues Ser762–Leu782. The Cytoplasmic segment spans residues Lys783–Val786. A helical membrane pass occupies residues Val787–Leu807. Over Pro808 to Ala817 the chain is Lumenal. A helical membrane pass occupies residues Glu818–Ala838. Residues Tyr839–His885 lie on the Cytoplasmic side of the membrane. The helical transmembrane segment at Pro886–Leu906 threads the bilayer. Residues Lys907–Leu932 are Lumenal-facing. One can recognise a Peptidase C18 domain in the interval Lys907–Leu1030. The segment at Ala908–Arg1210 is protease NS2-3. Cys926 carries the S-palmitoyl cysteine; by host lipid modification. Residues Ala933 to Ile953 traverse the membrane as a helical segment. Residues Ala933–Ile953 form an interaction with host SCPS1 region. Residues Tyr954 to Thr1661 lie on the Cytoplasmic side of the membrane. Residues His956, Glu976, and Cys997 each act as for protease NS2 activity; shared with dimeric partner in the active site. The Peptidase S29 domain maps to Ala1031–Pro1212. Catalysis depends on charge relay system; for serine protease NS3 activity residues His1087 and Asp1111. Zn(2+) contacts are provided by Cys1127 and Cys1129. Ser1169 acts as the Charge relay system; for serine protease NS3 activity in catalysis. Cys1175 and His1179 together coordinate Zn(2+). Residues Pro1221–His1373 form the Helicase ATP-binding domain. Ala1234–Ser1241 contributes to the ATP binding site. Mg(2+)-binding residues include Ser1241 and Glu1321. The short motif at Asp1320–His1323 is the DECH box element. Residues Gln1490–Thr1502 are RNA-binding. The helical transmembrane segment at Ser1662 to Gly1682 threads the bilayer. The tract at residues Cys1683 to Asp1694 is NS3-binding. Residues Cys1683–Thr1809 are Cytoplasmic-facing. The helical transmembrane segment at Thr1810–Ala1830 threads the bilayer. Over Thr1831–Gly1832 the chain is Lumenal. Residues Phe1833–Val1853 traverse the membrane as a helical segment. A topological domain (cytoplasmic) is located at residue Asp1854. A helical membrane pass occupies residues Val1855–Gly1875. The Lumenal portion of the chain corresponds to Glu1876–Asn1885. The chain crosses the membrane as a helical span at residues Leu1886–Leu1906. The Cytoplasmic portion of the chain corresponds to Arg1907–Cys1976. Cys1976 carries the S-palmitoyl cysteine; by host lipid modification. Residues Ser1977–Met2007 lie within the membrane without spanning it. Residues Pro2008–Arg3012 are Cytoplasmic-facing. Positions 2015, 2033, 2035, and 2056 each coordinate Zn(2+). Residues Glu2124–Ala2212 are FKBP8-binding. The segment at Glu2124–Ala2332 is transcriptional activation. Positions Pro2139–Pro2143 are interaction with non-structural protein 4A. Residues Arg2192–Pro2213 form a disordered region. The tract at residues Arg2193–Glu2460 is interaction with host SKP2. Residues Ser2198, Ser2201, Ser2205, Ser2208, Ser2211, and Ser2214 each carry the phosphoserine; by host modification. The segment covering Ser2198 to Pro2213 has biased composition (low complexity). The ISDR stretch occupies residues Ser2214–Lys2249. An interaction with EIF2AK2/PKR region spans residues Ser2214–Leu2275. The NS4B-binding stretch occupies residues Lys2249–Tyr2306. The segment at Glu2299–Pro2377 is V3. Positions Ala2322–Pro2325 match the SH3-binding motif. A Nuclear localization signal motif is present at residues Pro2327–Leu2335. Lys2350 is covalently cross-linked (Glycyl lysine isopeptide (Lys-Gly) (interchain with G-Cter in ubiquitin)). The disordered stretch occupies residues Pro2354–Thr2431. The span at Leu2355 to Ser2391 shows a compositional bias: polar residues. Phosphoserine; by host is present on residues Ser2471 and Ser2484. In terms of domain architecture, RdRp catalytic spans Pro2656–Asp2774. Mg(2+) is bound by residues Asp2662, Asp2760, and Asp2761. Residues Leu3013 to Arg3033 form a helical membrane-spanning segment.

It belongs to the hepacivirus polyprotein family. In terms of assembly, homooligomer. Interacts with E1 (via C-terminus). Interacts with the non-structural protein 5A. Interacts (via N-terminus) with host STAT1 (via SH2 domain); this interaction results in decreased STAT1 phosphorylation and ubiquitin-mediated proteasome-dependent STAT1 degradation, leading to decreased IFN-stimulated gene transcription. Interacts with host STAT3; this interaction constitutively activates STAT3. Interacts with host LTBR receptor. Interacts with host TNFRSF1A receptor and possibly induces apoptosis. Interacts with host HNRPK. Interacts with host YWHAE. Interacts with host UBE3A/E6AP. Interacts with host DDX3X. Interacts with host APOA2. Interacts with host RXRA protein. Interacts with host SP110 isoform 3/Sp110b; this interaction sequesters the transcriptional corepressor SP110 away from the nucleus. Interacts with host CREB3 nuclear transcription protein; this interaction triggers cell transformation. Interacts with host ACY3. Interacts with host C1QR1. Interacts with host RBM24; this interaction, which enhances the interaction of the mature core protein with 5'-UTR, may inhibit viral translation and favor replication. Interacts with host EIF2AK2/PKR; this interaction induces the autophosphorylation of EIF2AK2. Part of the viral assembly initiation complex composed of NS2, E1, E2, NS3, NS4A, NS5A and the mature core protein. Forms a heterodimer with envelope glycoprotein E2. Interacts with mature core protein. Interacts with protease NS2. The heterodimer E1/E2 interacts with host CLDN1; this interaction plays a role in viral entry into host cell. Interacts with host SPSB2 (via C-terminus). Part of the viral assembly initiation complex composed of NS2, E1, E2, NS3, NS4A, NS5A and the mature core protein. Interacts with host NEURL3; this interaction prevents E1 binding to glycoprotein E2. As to quaternary structure, forms a heterodimer with envelope glycoprotein E1. Interacts with host CD81 and SCARB1 receptors; these interactions play a role in viral entry into host cell. Interacts with host EIF2AK2/PKR; this interaction inhibits EIF2AK2 and probably allows the virus to evade the innate immune response. Interacts with host CD209/DC-SIGN and CLEC4M/DC-SIGNR. Interact with host SPCS1; this interaction is essential for viral particle assembly. Interacts with protease NS2. The heterodimer E1/E2 interacts with host CLDN1; this interaction plays a role in viral entry into host cell. Part of the viral assembly initiation complex composed of NS2, E1, E2, NS3, NS4A, NS5A and the mature core protein. Interacts with host SLC3A2/4F2hc; the interaction may facilitate viral entry into host cell. Interacts with human PLSCR1. In terms of assembly, homohexamer. Homoheptamer. Interacts with protease NS2. Homodimer. Interacts with host SPCS1; this interaction is essential for viral particle assembly. Interacts with envelope glycoprotein E1. Interacts with envelope glycoprotein E2. Interacts with viroporin p7. Interacts with serine protease/helicase NS3. Part of the replication complex composed of NS2, NS3, NS4A, NS4B, NS5A and the RNA-directed RNA polymerase embedded in an ER-derived membranous web. Part of the viral assembly initiation complex composed of NS2, E1, E2, NS3, NS4A, NS5A and the mature core protein. As to quaternary structure, interacts with protease NS2. Interacts with non-structural protein 4A; this interaction stabilizes the folding of NS3 serine protease. NS3-NS4A interaction is essential for NS3 activation and allows membrane anchorage of the latter. NS3/NS4A complex also prevents phosphorylation of host IRF3, thus preventing the establishment of dsRNA induced antiviral state. Interacts with host MAVS; this interaction leads to the cleavage and inhibition of host MAVS. Interacts with host TICAM1; this interaction leads to the cleavage and inhibition of host TICAM1. Interacts with host TANK-binding kinase/TBK1; this interaction results in the inhibition of the association between TBK1 and IRF3, which leads to the inhibition of IRF3 activation. Interacts with host RBM24. Part of the replication complex composed of NS2, NS3, NS4A, NS4B, NS5A and the RNA-directed RNA polymerase embedded in an ER-derived membranous web. Part of the viral assembly initiation complex composed of NS2, E1, E2, NS3, NS4A, NS5A and the mature core protein. In terms of assembly, interacts with NS3 serine protease; this interaction stabilizes the folding of NS3 serine protease. NS3-NS4A interaction is essential for NS3 activation and allows membrane anchorage of the latter. Interacts with non-structural protein 5A (via N-terminus). Part of the replication complex composed of NS2, NS3, NS4A, NS4B, NS5A and the RNA-directed RNA polymerase embedded in an ER-derived membranous web. Part of the viral assembly initiation complex composed of NS2, E1, E2, NS3, NS4A, NS5A and the mature core protein. Homomultimer. Interacts with non-structural protein NS5A. Interacts with host PLA2G4C; this interaction likely initiates the recruitment of replication complexes to lipid droplets. Interacts with host STING; this interaction disrupts the interaction between STING and TBK1 thereby suppressing the interferon signaling. Part of the replication complex composed of NS2, NS3, NS4A, NS4B, NS5A and the RNA-directed RNA polymerase embedded in an ER-derived membranous web. As to quaternary structure, monomer. Homodimer; dimerization is required for RNA-binding. Interacts with the mature core protein. Interacts (via N-terminus) with non-structural protein 4A. Interacts with non-structural protein 4B. Interacts (via region D2) with RNA-directed RNA polymerase. Part of the viral assembly initiation complex composed of NS2, E1, E2, NS3, NS4A, NS5A and the mature core protein. Part of the replication complex composed of NS2, NS3, NS4A, NS4B, NS5A and the RNA-directed RNA polymerase embedded in an ER-derived membranous web. Interacts with host GRB2. Interacts with host BIN1. Interacts with host PIK3R1. Interacts with host SRCAP. Interacts with host FKBP8. Interacts (via C-terminus) with host VAPB (via MSP domain). Interacts with host EIF2AK2/PKR; this interaction leads to disruption of EIF2AK2 dimerization by NS5A and probably allows the virus to evade the innate immune response. Interacts (via N-terminus) with host PACSIN2 (via N-terminus); this interaction attenuates protein kinase C alpha-mediated phosphorylation of PACSIN2 by disrupting the interaction between PACSIN2 and PRKCA. Interacts (via N-terminus) with host SRC kinase (via SH2 domain). Interacts with most Src-family kinases. Interacts with host IFI27 and SKP2; promotes the ubiquitin-mediated proteasomal degradation of NS5A. Interacts with host GPS2. Interacts with host TNFRSF21; this interaction allows the modulation by the virus of JNK, p38 MAPK, STAT3, and Akt signaling pathways in a DR6-dependent manner. Interacts (via N-terminus) with host CIDEB (via N-terminus); this interaction seems to regulate the association of HCV particles with APOE. Interacts with host CHKA/Choline Kinase-alpha; CHKA bridges host PI4KA and NS5A and potentiates NS5A-stimulated PI4KA activity, which then facilitates the targeting of the ternary complex to the ER for viral replication. Interacts with host SPSB2 (via C-terminus); this interaction targets NS5A for ubiquitination and degradation. Interacts with host RAB18; this interaction may promote the association of NS5A and other replicase components with lipid droplets. Interacts (via region D2) with host PPIA/CYPA; the interaction stimulates RNA-binding ability of NS5A and is dependent on the peptidyl-prolyl cis-trans isomerase activity of PPIA/CYPA. Interacts with host TRIM14; this interaction induces the degradation of NS5A. In terms of assembly, homooligomer. Interacts with non-structural protein 5A. Interacts with host VAPB. Interacts with host PRK2/PKN2. Interacts with host HNRNPA1 and SEPT6; these interactions facilitate viral replication. Part of the replication complex composed of NS2, NS3, NS4A, NS4B, NS5A and the RNA-directed RNA polymerase. Zn(2+) is required as a cofactor. It depends on Mg(2+) as a cofactor. Specific enzymatic cleavages in vivo yield mature proteins. The structural proteins, core, E1, E2 and p7 are produced by proteolytic processing by host signal peptidases. The core protein precursor is synthesized as a 23 kDa, which is retained in the ER membrane through the hydrophobic signal peptide. Cleavage by the signal peptidase releases the 21 kDa mature core protein. The cleavage of the core protein precursor occurs between aminoacids 176 and 188 but the exact cleavage site is not known. Some degraded forms of the core protein appear as well during the course of infection. The other proteins (p7, NS2, NS3, NS4A, NS4B, NS5A and NS5B) are cleaved by the viral proteases. Autoprocessing between NS2 and NS3 is mediated by the NS2 cysteine protease catalytic domain and regulated by the NS3 N-terminal domain. Post-translationally, phosphorylated by host PKC and PKA. In terms of processing, ubiquitinated; mediated by UBE3A and leading to core protein subsequent proteasomal degradation. Highly N-glycosylated. Post-translationally, palmitoylation is required for NS2/3 autoprocessing and E2 recruitment to membranes. In terms of processing, palmitoylated. This modification may play a role in its polymerization or in protein-protein interactions. Phosphorylated on serines in a basal form termed p56. p58 is a hyperphosphorylated form of p56. p56 and p58 coexist in the cell in roughly equivalent amounts. Hyperphosphorylation is dependent on the presence of NS4A. Host CSNK1A1/CKI-alpha or RPS6KB1 kinases may be responsible for NS5A phosphorylation. Post-translationally, tyrosine phosphorylation is essential for the interaction with host SRC. In terms of processing, ubiquitinated. Ubiquitination, most probably at Lys-2350, mediated by host IFI27 and SKP2 leads to proteasomal degradation, restricting viral infection. Ubiquitination by host TRIM22 leads to interruption of viral replication. The N-terminus is phosphorylated by host PRK2/PKN2.

It is found in the host endoplasmic reticulum membrane. Its subcellular location is the host mitochondrion membrane. The protein localises to the virion. The protein resides in the host cytoplasm. It localises to the host nucleus. It is found in the host lipid droplet. Its subcellular location is the virion membrane. The protein localises to the host mitochondrion. The protein resides in the host cell membrane. It localises to the host perinuclear region. It catalyses the reaction Hydrolysis of four peptide bonds in the viral precursor polyprotein, commonly with Asp or Glu in the P6 position, Cys or Thr in P1 and Ser or Ala in P1'.. It carries out the reaction a ribonucleoside 5'-triphosphate + H2O = a ribonucleoside 5'-diphosphate + phosphate + H(+). The catalysed reaction is ATP + H2O = ADP + phosphate + H(+). The enzyme catalyses RNA(n) + a ribonucleoside 5'-triphosphate = RNA(n+1) + diphosphate. Its activity is regulated as follows. Inhibited by the antiviral drug hexamethylene amiloride. Inhibition by amantadine appears to be genotype-dependent. Also inhibited by long-alkyl-chain iminosugar derivatives. Activity is up-regulated by PRK2/PKN2-mediated phosphorylation. Packages viral RNA to form a viral nucleocapsid, and promotes virion budding. Participates in the viral particle production as a result of its interaction with the non-structural protein 5A. Binds RNA and may function as a RNA chaperone to induce the RNA structural rearrangements taking place during virus replication. Modulates viral translation initiation by interacting with viral IRES and 40S ribosomal subunit. Affects various cell signaling pathways, host immunity and lipid metabolism. Prevents the establishment of cellular antiviral state by blocking the interferon-alpha/beta (IFN-alpha/beta) and IFN-gamma signaling pathways and by blocking the formation of phosphorylated STAT1 and promoting ubiquitin-mediated proteasome-dependent degradation of STAT1. Activates STAT3 leading to cellular transformation. Regulates the activity of cellular genes, including c-myc and c-fos. May repress the promoter of p53, and sequester CREB3 and SP110 isoform 3/Sp110b in the cytoplasm. Represses cell cycle negative regulating factor CDKN1A, thereby interrupting an important check point of normal cell cycle regulation. Targets transcription factors involved in the regulation of inflammatory responses and in the immune response: suppresses TNF-induced NF-kappa-B activation, and activates AP-1. Binds to dendritic cells (DCs) via C1QR1, resulting in down-regulation of T-lymphocytes proliferation. Alters lipid metabolism by interacting with hepatocellular proteins involved in lipid accumulation and storage. Induces up-regulation of FAS promoter activity, and thereby contributes to the increased triglyceride accumulation in hepatocytes (steatosis). Functionally, forms a heterodimer with envelope glycoprotein E2, which mediates virus attachment to the host cell, virion internalization through clathrin-dependent endocytosis and fusion with host membrane. Fusion with the host cell is most likely mediated by both E1 and E2, through conformational rearrangements of the heterodimer required for fusion rather than a classical class II fusion mechanism. E1/E2 heterodimer binds host apolipoproteins such as APOB and ApoE thereby forming a lipo-viro-particle (LVP). APOE associated to the LVP allows the initial virus attachment to cell surface receptors such as the heparan sulfate proteoglycans (HSPGs), syndecan-1 (SDC1), syndecan-1 (SDC2), the low-density lipoprotein receptor (LDLR) and scavenger receptor class B type I (SCARB1). The cholesterol transfer activity of SCARB1 allows E2 exposure and binding of E2 to SCARB1 and the tetraspanin CD81. E1/E2 heterodimer binding on CD81 activates the epithelial growth factor receptor (EGFR) signaling pathway. Diffusion of the complex E1-E2-EGFR-SCARB1-CD81 to the cell lateral membrane allows further interaction with Claudin 1 (CLDN1) and occludin (OCLN) to finally trigger HCV entry. Its function is as follows. Forms a heterodimer with envelope glycoprotein E1, which mediates virus attachment to the host cell, virion internalization through clathrin-dependent endocytosis and fusion with host membrane. Fusion with the host cell is most likely mediated by both E1 and E2, through conformational rearrangements of the heterodimer required for fusion rather than a classical class II fusion mechanism. The interaction between envelope glycoprotein E2 and host apolipoprotein E/APOE allows the proper assembly, maturation and infectivity of the viral particles. This interaction is probably promoted via the up-regulation of cellular autophagy by the virus. E1/E2 heterodimer binds host apolipoproteins such as APOB and APOE thereby forming a lipo-viro-particle (LVP). APOE associated to the LVP allows the initial virus attachment to cell surface receptors such as the heparan sulfate proteoglycans (HSPGs), syndecan-1 (SDC1), syndecan-1 (SDC2), the low-density lipoprotein receptor (LDLR) and scavenger receptor class B type I (SCARB1). The cholesterol transfer activity of SCARB1 allows E2 exposure and binding of E2 to SCARB1 and the tetraspanin CD81. E1/E2 heterodimer binding on CD81 activates the epithelial growth factor receptor (EGFR) signaling pathway. Diffusion of the complex E1-E2-EGFR-SCARB1-CD81 to the cell lateral membrane allows further interaction with Claudin 1 (CLDN1) and occludin (OCLN) to finally trigger HCV entry. Inhibits host EIF2AK2/PKR activation, preventing the establishment of an antiviral state. Viral ligand for CD209/DC-SIGN and CLEC4M/DC-SIGNR, which are respectively found on dendritic cells (DCs), and on liver sinusoidal endothelial cells and macrophage-like cells of lymph node sinuses. These interactions allow the capture of circulating HCV particles by these cells and subsequent facilitated transmission to permissive cells such as hepatocytes and lymphocyte subpopulations. The interaction between E2 and host amino acid transporter complex formed by SLC3A2 and SLC7A5/LAT1 may facilitate viral entry into host cell. In terms of biological role, ion channel protein that acts as a viroporin and plays an essential role in the assembly, envelopment and secretion of viral particles. Regulates the host cell secretory pathway, which induces the intracellular retention of viral glycoproteins and favors assembly of viral particles. Creates a pore in acidic organelles and releases Ca(2+) and H(+) in the cytoplasm of infected cells, leading to a productive viral infection. High levels of cytoplasmic Ca(2+) may trigger membrane trafficking and transport of viral ER-associated proteins to viroplasms, sites of viral genome replication. This ionic imbalance induces the assembly of the inflammasome complex, which triggers the maturation of pro-IL-1beta into IL-1beta through the action of caspase-1. Targets also host mitochondria and induces mitochondrial depolarization. In addition of its role as a viroporin, acts as a lipid raft adhesion factor. Cysteine protease required for the proteolytic auto-cleavage between the non-structural proteins NS2 and NS3. The N-terminus of NS3 is required for the function of NS2 protease (active region NS2-3). Promotes the initiation of viral particle assembly by mediating the interaction between structural and non-structural proteins. Functionally, displays three enzymatic activities: serine protease with a chymotrypsin-like fold, NTPase and RNA helicase. NS3 serine protease, in association with NS4A, is responsible for the cleavages of NS3-NS4A, NS4A-NS4B, NS4B-NS5A and NS5A-NS5B. The NS3/NS4A complex prevents phosphorylation of host IRF3, thus preventing the establishment of dsRNA induced antiviral state. The NS3/NS4A complex induces host amino acid transporter component SLC3A2, thus contributing to HCV propagation. NS3 RNA helicase binds to RNA and unwinds both dsDNA and dsRNA in the 3' to 5' direction, and likely resolves RNA complicated stable secondary structures in the template strand. Binds a single ATP and catalyzes the unzipping of a single base pair of dsRNA. Inhibits host antiviral proteins TBK1 and IRF3 thereby preventing the establishment of an antiviral state. Cleaves host MAVS/CARDIF thereby preventing the establishment of an antiviral state. Cleaves host TICAM1/TRIF, thereby disrupting TLR3 signaling and preventing the establishment of an antiviral state. Its function is as follows. Induces a specific membrane alteration that serves as a scaffold for the virus replication complex. This membrane alteration gives rise to the so-called ER-derived membranous web that contains the replication complex. NS4B self-interaction contributes to its function in membranous web formation. Promotes host TRIF protein degradation in a CASP8-dependent manner thereby inhibiting host TLR3-mediated interferon signaling. Disrupts the interaction between STING and TBK1 contributing to the inhibition of interferon signaling. In terms of biological role, phosphorylated protein that is indispensable for viral replication and assembly. Both hypo- and hyperphosphorylated states are required for the viral life cycle. The hyperphosphorylated form of NS5A is an inhibitor of viral replication. Involved in RNA-binding and especially in binding to the viral genome. Zinc is essential for RNA-binding. Participates in the viral particle production as a result of its interaction with the mature viral core protein. Its interaction with host VAPB may target the viral replication complex to vesicles. Down-regulates viral IRES translation initiation. Mediates interferon resistance, presumably by interacting with and inhibiting host EIF2AK2/PKR. Prevents BIN1-induced apoptosis. Acts as a transcriptional activator of some host genes important for viral replication when localized in the nucleus. Via the interaction with host PACSIN2, modulates lipid droplet formation in order to promote virion assembly. Modulates TNFRSF21/DR6 signaling pathway for viral propagation. RNA-dependent RNA polymerase that performs primer-template recognition and RNA synthesis during viral replication. Initiates RNA transcription/replication at a flavin adenine dinucleotide (FAD), resulting in a 5'- FAD cap on viral RNAs. In this way, recognition of viral 5' RNA by host pattern recognition receptors can be bypassed, thereby evading activation of antiviral pathways. This Hepatitis C virus genotype 2b (isolate JPUT971017) (HCV) protein is Genome polyprotein.